A 378-amino-acid polypeptide reads, in one-letter code: Ribosomal RNA large subunit methyltransferase G (378 aa).

The protein belongs to the methyltransferase superfamily. RlmG family.

It is found in the cytoplasm. The enzyme catalyses guanosine(1835) in 23S rRNA + S-adenosyl-L-methionine = N(2)-methylguanosine(1835) in 23S rRNA + S-adenosyl-L-homocysteine + H(+). Specifically methylates the guanine in position 1835 (m2G1835) of 23S rRNA. This chain is Ribosomal RNA large subunit methyltransferase G, found in Salmonella agona (strain SL483).